The chain runs to 123 residues: MPTIKQLIRNTRQPIRNVTKSPALRGCPQRRGTCTRVYTITPKKPNSALRKVARVRLTSGFEITAYIPGIGHNSQEHSVVLVRGGRVKDLPGVRYHIVRGTLDAVGVKDRQQGRSKYGVKKPK.

It belongs to the universal ribosomal protein uS12 family. In terms of assembly, part of the 30S ribosomal subunit.

It is found in the plastid. The protein resides in the chloroplast. In terms of biological role, with S4 and S5 plays an important role in translational accuracy. Located at the interface of the 30S and 50S subunits. This Daucus carota (Wild carrot) protein is Small ribosomal subunit protein uS12cz/uS12cy (rps12-A).